A 178-amino-acid chain; its full sequence is Large ribosomal subunit protein uL6 (178 aa).

It belongs to the universal ribosomal protein uL6 family. As to quaternary structure, part of the 50S ribosomal subunit.

Functionally, this protein binds to the 23S rRNA, and is important in its secondary structure. It is located near the subunit interface in the base of the L7/L12 stalk, and near the tRNA binding site of the peptidyltransferase center. This Streptococcus thermophilus (strain CNRZ 1066) protein is Large ribosomal subunit protein uL6.